Consider the following 120-residue polypeptide: UPF0102 protein PST_1070 (120 aa).

The protein belongs to the UPF0102 family.

This Stutzerimonas stutzeri (strain A1501) (Pseudomonas stutzeri) protein is UPF0102 protein PST_1070.